The sequence spans 115 residues: Nucleoid-associated protein LA_4332 (115 aa).

This sequence belongs to the YbaB/EbfC family. Homodimer.

The protein localises to the cytoplasm. The protein resides in the nucleoid. Its function is as follows. Binds to DNA and alters its conformation. May be involved in regulation of gene expression, nucleoid organization and DNA protection. This Leptospira interrogans serogroup Icterohaemorrhagiae serovar Lai (strain 56601) protein is Nucleoid-associated protein LA_4332.